A 304-amino-acid polypeptide reads, in one-letter code: Undecaprenyl-diphosphatase (304 aa).

Transmembrane regions (helical) follow at residues 5–25, 47–67, 72–92, 111–131, 137–157, 209–231, 248–268, and 283–303; these read FLFI…EFVP, GFPE…VVVL, ISSS…LKTS, FGIN…LFHD, LFST…LIVI, ISGL…AMVG, TNWI…LVVI, and FAIY…TKVI.

It belongs to the UppP family.

Its subcellular location is the cell membrane. The catalysed reaction is di-trans,octa-cis-undecaprenyl diphosphate + H2O = di-trans,octa-cis-undecaprenyl phosphate + phosphate + H(+). Catalyzes the dephosphorylation of undecaprenyl diphosphate (UPP). Confers resistance to bacitracin. This is Undecaprenyl-diphosphatase from Clostridium perfringens (strain ATCC 13124 / DSM 756 / JCM 1290 / NCIMB 6125 / NCTC 8237 / Type A).